A 371-amino-acid chain; its full sequence is Leucine-rich repeat-containing protein 58 (371 aa).

Serine 24 is modified (phosphoserine). LRR repeat units lie at residues 45 to 66, 69 to 91, 92 to 113, 121 to 143, 144 to 166, 167 to 189, 190 to 211, 213 to 234, and 236 to 256; these read ALLR…LGSG, HLQL…LALR, GLRT…PKGL, SLQV…LELR, ALQT…ENLQ, SLEC…GNLP, SLNY…LSQL, SLRS…ILNL, and HLEE…RDLT. Over residues 340–351 the composition is skewed to low complexity; the sequence is SSASHSSTSQSE. The interval 340–361 is disordered; sequence SSASHSSTSQSESDSEDEASVA.

The sequence is that of Leucine-rich repeat-containing protein 58 (LRRC58) from Homo sapiens (Human).